The primary structure comprises 796 residues: Potassium transporter 10 (796 aa).

The interval 1-30 (MAGRVESSIGGGEIDEEGDERGSMWDLDQS) is disordered. At 1 to 58 (MAGRVESSIGGGEIDEEGDERGSMWDLDQSLDQPMDEEAGRLRNMYREKKFSAFLLLQ) the chain is on the cytoplasmic side. The chain crosses the membrane as a helical span at residues 59 to 79 (LSFQSLGVVYGDLGTSPLYVF). Residues 80–95 (YNTFPRGIKDPEDIIG) are Extracellular-facing. Residues 96 to 116 (ALSLIIYSLTLIPLLKYVFVV) form a helical membrane-spanning segment. The Cytoplasmic segment spans residues 117 to 184 (CKANDNGQGG…ENGTSRKNAL (68 aa)). Residues 185 to 205 (LILVLVGTCMVIGDGILTPAI) form a helical membrane-spanning segment. Topologically, residues 206–217 (SVLSAAGGLRVN) are extracellular. The helical transmembrane segment at 218 to 238 (LPHINNGIVVVVAVVILVSLF) threads the bilayer. Residues 239-248 (SVQHYGTDRV) are Cytoplasmic-facing. The chain crosses the membrane as a helical span at residues 249–269 (GWLFAPIVFLWFLFIASIGMF). At 270–298 (NIWKHDPSVLKAFSPVYIFRYFKRGGQDR) the chain is on the extracellular side. The helical transmembrane segment at 299-319 (WTSLGGIMLSITGIEALFADL) threads the bilayer. The Cytoplasmic portion of the chain corresponds to 320 to 321 (SH). The helical transmembrane segment at 322–342 (FPVSAVQFAFTVIVFPCLLLA) threads the bilayer. The Extracellular portion of the chain corresponds to 343 to 368 (YSGQAAYLRKYPHHVEDAFYQSIPKR). A helical transmembrane segment spans residues 369–389 (VYWPMFIIATAAAIVASQATI). The Cytoplasmic portion of the chain corresponds to 390-420 (SATFSLIKQALAHGCFPRVKVVHTSRKFLGQ). The helical transmembrane segment at 421–441 (IYVPDINWILMILCIAVTAGF) threads the bilayer. At 442–453 (KNQNQIGNAYGT) the chain is on the extracellular side. A helical transmembrane segment spans residues 454 to 474 (AVVIVMLVTTLLMMLIMILVW). At 475-480 (RCHWVL) the chain is on the cytoplasmic side. A helical transmembrane segment spans residues 481-501 (VLLFTLLSLVVECTYFSAVLF). Topologically, residues 502–505 (KVNQ) are extracellular. A helical membrane pass occupies residues 506–526 (GGWVPLVIAAAFLVIMYVWHY). Residues 527–796 (GTLKRYEFEM…LLNVGQIFYV (270 aa)) lie on the Cytoplasmic side of the membrane.

Belongs to the HAK/KUP transporter (TC 2.A.72.3) family.

It localises to the cell membrane. Putative potassium transporter. The chain is Potassium transporter 10 (POT10) from Arabidopsis thaliana (Mouse-ear cress).